The primary structure comprises 302 residues: 33 kDa chaperonin (302 aa).

2 disulfide bridges follow: Cys247-Cys249 and Cys280-Cys283.

The protein belongs to the HSP33 family. Post-translationally, under oxidizing conditions two disulfide bonds are formed involving the reactive cysteines. Under reducing conditions zinc is bound to the reactive cysteines and the protein is inactive.

The protein resides in the cytoplasm. Its function is as follows. Redox regulated molecular chaperone. Protects both thermally unfolding and oxidatively damaged proteins from irreversible aggregation. Plays an important role in the bacterial defense system toward oxidative stress. The sequence is that of 33 kDa chaperonin from Prochlorococcus marinus (strain AS9601).